The primary structure comprises 323 residues: Beta-ketoacyl-[acyl-carrier-protein] synthase III (323 aa).

Residues C113 and H250 contribute to the active site. Residues 251 to 255 (QANRR) form an ACP-binding region. The active site involves N280.

The protein belongs to the thiolase-like superfamily. FabH family. As to quaternary structure, homodimer.

The protein localises to the cytoplasm. The catalysed reaction is malonyl-[ACP] + acetyl-CoA + H(+) = 3-oxobutanoyl-[ACP] + CO2 + CoA. Its pathway is lipid metabolism; fatty acid biosynthesis. In terms of biological role, catalyzes the condensation reaction of fatty acid synthesis by the addition to an acyl acceptor of two carbons from malonyl-ACP. Catalyzes the first condensation reaction which initiates fatty acid synthesis and may therefore play a role in governing the total rate of fatty acid production. Possesses both acetoacetyl-ACP synthase and acetyl transacylase activities. Its substrate specificity determines the biosynthesis of branched-chain and/or straight-chain of fatty acids. The polypeptide is Beta-ketoacyl-[acyl-carrier-protein] synthase III (Sinorhizobium medicae (strain WSM419) (Ensifer medicae)).